Consider the following 662-residue polypeptide: LIM domain kinase 1 (662 aa).

LIM zinc-binding domains follow at residues 24–83 and 84–145; these read PVCA…RFGE and LCHG…MVVT. Positions 166-259 constitute a PDZ domain; that stretch reads LVSIPACSDG…LLQLTIEHDP (94 aa). The segment at 262–328 is disordered; that stretch reads PLPRDLALPC…ASQRKDIGRS (67 aa). The span at 272–287 shows a compositional bias: pro residues; that stretch reads SPLPDPHSPLRSPVPA. Residues 309–320 show a composition bias toward low complexity; the sequence is SPGSSSVGSPAS. Residues 346 to 611 form the Protein kinase domain; that stretch reads LIHGEVLGKG…PSFSKLEQWL (266 aa). Residues 352–360 and Lys-375 each bind ATP; that span reads LGKGCFGQA. Asp-467 is a catalytic residue.

It belongs to the protein kinase superfamily. TKL Ser/Thr protein kinase family. Expressed predominantly in the brain.

It localises to the cytoplasm. Its subcellular location is the nucleus. It is found in the cytoskeleton. The protein resides in the cell projection. The protein localises to the growth cone. The enzyme catalyses L-seryl-[protein] + ATP = O-phospho-L-seryl-[protein] + ADP + H(+). It catalyses the reaction L-threonyl-[protein] + ATP = O-phospho-L-threonyl-[protein] + ADP + H(+). Protein kinase which regulates actin filament dynamics. Phosphorylates and inactivates the actin binding/depolymerizing factor cofilin, thereby stabilizing the actin cytoskeleton. Required for motility of the axon growth cone. In Gallus gallus (Chicken), this protein is LIM domain kinase 1 (LIMK1).